A 659-amino-acid chain; its full sequence is Centrosomal protein of 76 kDa (659 aa).

S75 and S83 each carry phosphoserine.

This sequence belongs to the CEP76 family. Interacts with CCP110 and CEP97.

It is found in the cytoplasm. The protein resides in the cytoskeleton. The protein localises to the microtubule organizing center. Its subcellular location is the centrosome. It localises to the centriole. Functionally, centrosomal protein involved in regulation of centriole duplication. Required to limit centriole duplication to once per cell cycle by preventing centriole reduplication. This Homo sapiens (Human) protein is Centrosomal protein of 76 kDa (CEP76).